Here is a 172-residue protein sequence, read N- to C-terminus: Shikimate kinase (172 aa).

G11–T16 provides a ligand contact to ATP. T15 contacts Mg(2+). Substrate contacts are provided by D33, R57, and G79. R117 is an ATP binding site. Position 136 (R136) interacts with substrate.

Belongs to the shikimate kinase family. As to quaternary structure, monomer. The cofactor is Mg(2+).

The protein localises to the cytoplasm. It carries out the reaction shikimate + ATP = 3-phosphoshikimate + ADP + H(+). The protein operates within metabolic intermediate biosynthesis; chorismate biosynthesis; chorismate from D-erythrose 4-phosphate and phosphoenolpyruvate: step 5/7. Catalyzes the specific phosphorylation of the 3-hydroxyl group of shikimic acid using ATP as a cosubstrate. In Caldicellulosiruptor saccharolyticus (strain ATCC 43494 / DSM 8903 / Tp8T 6331), this protein is Shikimate kinase.